The sequence spans 556 residues: Cytochrome P450 monooxygenase polC (556 aa).

Residues 17 to 37 form a helical membrane-spanning segment; that stretch reads LCFAISLLCAVAIATFLHKLY. A heme-binding site is contributed by Cys479.

It belongs to the cytochrome P450 family. Heme serves as cofactor.

It is found in the membrane. It catalyses the reaction motiol + 3 reduced [NADPH--hemoprotein reductase] + 3 O2 = 4beta-carboxyl motiol + 3 oxidized [NADPH--hemoprotein reductase] + 4 H2O + 4 H(+). It participates in secondary metabolite biosynthesis; terpenoid biosynthesis. Functionally, cytochrome P450 monooxygenase; part of the gene cluster that mediates the biosynthesis of antifungal fernane-type triterpenoid polytolypin. PolC uses motiol as a substrate and converts the methyl group at position C-4 to a carboxyl group. Within the pathway, the triterpene cyclase polA first catalyzes the cyclization of 2,3-oxidosqualene to motiol, polC converts the 4-alpha-methyl group of motiol to a carboxyl group, polB is responsible for appending a hydroxyl group at the 2-alpha position and polE is a dual functional P450, which can catalyze the formation of both the 1-beta-hydroxyl group and 10-beta-carboxyl group. The polypeptide is Cytochrome P450 monooxygenase polC (Polytolypa hystricis (strain UAMH7299)).